The following is a 142-amino-acid chain: MNIIDRFEQENISKLIENKKIPDFKAGDTVKVTVKIVDRSVEKDGKEKLTERFQAYEGVVIAKRNRGITSSFLVRKISHGEGVERRFMTYSPVVHAIDVVKYGVVRRAKLYYLRERSGKSARIKERHMHIAKKPKAKVAEAV.

The protein belongs to the bacterial ribosomal protein bL19 family.

In terms of biological role, this protein is located at the 30S-50S ribosomal subunit interface and may play a role in the structure and function of the aminoacyl-tRNA binding site. The chain is Large ribosomal subunit protein bL19 from Rickettsia bellii (strain OSU 85-389).